A 467-amino-acid chain; its full sequence is Cobyrinate a,c-diamide synthase (467 aa).

The GATase cobBQ-type domain occupies 256-449 (RVGYAADQAF…AHIHVEGAPE (194 aa)). The active-site Nucleophile is C338.

Belongs to the CobB/CbiA family. Mg(2+) is required as a cofactor.

It carries out the reaction cob(II)yrinate + 2 L-glutamine + 2 ATP + 2 H2O = cob(II)yrinate a,c diamide + 2 L-glutamate + 2 ADP + 2 phosphate + 2 H(+). Its pathway is cofactor biosynthesis; adenosylcobalamin biosynthesis; cob(II)yrinate a,c-diamide from sirohydrochlorin (anaerobic route): step 10/10. Functionally, catalyzes the ATP-dependent amidation of the two carboxylate groups at positions a and c of cobyrinate, using either L-glutamine or ammonia as the nitrogen source. The polypeptide is Cobyrinate a,c-diamide synthase (Magnetococcus marinus (strain ATCC BAA-1437 / JCM 17883 / MC-1)).